A 658-amino-acid polypeptide reads, in one-letter code: UvrABC system protein B (658 aa).

The Helicase ATP-binding domain occupies 25–416; it reads KSLKNNNHYQ…QKNVAEQIIR (392 aa). 38 to 45 provides a ligand contact to ATP; that stretch reads GVTGSGKT. Positions 91–114 match the Beta-hairpin motif; sequence HFDYYQPESYIPRRDLFIEKDSSI. One can recognise a Helicase C-terminal domain in the interval 433–607; that stretch reads QVQDLFDEIK…ELKLRDDEIK (175 aa). The 36-residue stretch at 623-658 folds into the UVR domain; that stretch reads EKIIKELDKKMRERAKNLDFEEAMRLRDEIAQLRTL.

The protein belongs to the UvrB family. Forms a heterotetramer with UvrA during the search for lesions. Interacts with UvrC in an incision complex.

The protein resides in the cytoplasm. Functionally, the UvrABC repair system catalyzes the recognition and processing of DNA lesions. A damage recognition complex composed of 2 UvrA and 2 UvrB subunits scans DNA for abnormalities. Upon binding of the UvrA(2)B(2) complex to a putative damaged site, the DNA wraps around one UvrB monomer. DNA wrap is dependent on ATP binding by UvrB and probably causes local melting of the DNA helix, facilitating insertion of UvrB beta-hairpin between the DNA strands. Then UvrB probes one DNA strand for the presence of a lesion. If a lesion is found the UvrA subunits dissociate and the UvrB-DNA preincision complex is formed. This complex is subsequently bound by UvrC and the second UvrB is released. If no lesion is found, the DNA wraps around the other UvrB subunit that will check the other stand for damage. This chain is UvrABC system protein B, found in Helicobacter pylori (strain J99 / ATCC 700824) (Campylobacter pylori J99).